The chain runs to 332 residues: Glycerol-3-phosphate dehydrogenase [NAD(P)+] (332 aa).

Residues Ser10, Trp11, Lys31, and Lys105 each coordinate NADPH. Residues Lys105, Gly136, and Ser138 each contribute to the sn-glycerol 3-phosphate site. Residue Ala140 participates in NADPH binding. Sn-glycerol 3-phosphate contacts are provided by Lys191, Asp244, Ser254, Arg255, and Asn256. Catalysis depends on Lys191, which acts as the Proton acceptor. Residue Arg255 participates in NADPH binding. NADPH-binding residues include Val279 and Glu281.

This sequence belongs to the NAD-dependent glycerol-3-phosphate dehydrogenase family.

The protein resides in the cytoplasm. The enzyme catalyses sn-glycerol 3-phosphate + NAD(+) = dihydroxyacetone phosphate + NADH + H(+). It catalyses the reaction sn-glycerol 3-phosphate + NADP(+) = dihydroxyacetone phosphate + NADPH + H(+). The protein operates within membrane lipid metabolism; glycerophospholipid metabolism. Catalyzes the reduction of the glycolytic intermediate dihydroxyacetone phosphate (DHAP) to sn-glycerol 3-phosphate (G3P), the key precursor for phospholipid synthesis. The protein is Glycerol-3-phosphate dehydrogenase [NAD(P)+] of Anaeromyxobacter sp. (strain K).